Here is a 248-residue protein sequence, read N- to C-terminus: Pyridoxine 5'-phosphate synthase (248 aa).

Asn-7 lines the 3-amino-2-oxopropyl phosphate pocket. 1-deoxy-D-xylulose 5-phosphate is bound at residue Asp-9–His-10. Arg-18 is a binding site for 3-amino-2-oxopropyl phosphate. His-43 serves as the catalytic Proton acceptor. 1-deoxy-D-xylulose 5-phosphate is bound by residues Arg-45 and His-50. Glu-70 functions as the Proton acceptor in the catalytic mechanism. Thr-100 is a 1-deoxy-D-xylulose 5-phosphate binding site. Catalysis depends on His-191, which acts as the Proton donor. Residues Gly-192 and Gly-213 to His-214 contribute to the 3-amino-2-oxopropyl phosphate site.

The protein belongs to the PNP synthase family. Homooctamer; tetramer of dimers.

It is found in the cytoplasm. It catalyses the reaction 3-amino-2-oxopropyl phosphate + 1-deoxy-D-xylulose 5-phosphate = pyridoxine 5'-phosphate + phosphate + 2 H2O + H(+). It functions in the pathway cofactor biosynthesis; pyridoxine 5'-phosphate biosynthesis; pyridoxine 5'-phosphate from D-erythrose 4-phosphate: step 5/5. Functionally, catalyzes the complicated ring closure reaction between the two acyclic compounds 1-deoxy-D-xylulose-5-phosphate (DXP) and 3-amino-2-oxopropyl phosphate (1-amino-acetone-3-phosphate or AAP) to form pyridoxine 5'-phosphate (PNP) and inorganic phosphate. This is Pyridoxine 5'-phosphate synthase from Bordetella bronchiseptica (strain ATCC BAA-588 / NCTC 13252 / RB50) (Alcaligenes bronchisepticus).